The primary structure comprises 274 residues: NH(3)-dependent NAD(+) synthetase (274 aa).

46 to 53 is an ATP binding site; that stretch reads GISGGQDS. D52 is a binding site for Mg(2+). Position 140 (R140) interacts with deamido-NAD(+). ATP is bound at residue T160. E165 is a Mg(2+) binding site. Deamido-NAD(+) is bound by residues K173 and D180. K189 and T211 together coordinate ATP. 260–261 provides a ligand contact to deamido-NAD(+); that stretch reads HK.

This sequence belongs to the NAD synthetase family. Homodimer.

It catalyses the reaction deamido-NAD(+) + NH4(+) + ATP = AMP + diphosphate + NAD(+) + H(+). It functions in the pathway cofactor biosynthesis; NAD(+) biosynthesis; NAD(+) from deamido-NAD(+) (ammonia route): step 1/1. In terms of biological role, catalyzes the ATP-dependent amidation of deamido-NAD to form NAD. Uses ammonia as a nitrogen source. This is NH(3)-dependent NAD(+) synthetase from Streptococcus pyogenes serotype M3 (strain ATCC BAA-595 / MGAS315).